A 642-amino-acid polypeptide reads, in one-letter code: Chaperone protein DnaK (642 aa).

Threonine 198 is modified (phosphothreonine; by autocatalysis). Residues alanine 602 to aspartate 642 are disordered.

The protein belongs to the heat shock protein 70 family.

In terms of biological role, acts as a chaperone. In Dichelobacter nodosus (strain VCS1703A), this protein is Chaperone protein DnaK.